The sequence spans 452 residues: Ribosomal protein uS12 methylthiotransferase RimO (452 aa).

Residues 3–118 (GKIGFVSLGC…VMQAIHLHLP (116 aa)) enclose the MTTase N-terminal domain. Residues Cys-12, Cys-48, Cys-77, Cys-149, Cys-153, and Cys-156 each contribute to the [4Fe-4S] cluster site. Residues 135–381 (LTPKHYAYLK…MAKAEDISIK (247 aa)) enclose the Radical SAM core domain. The TRAM domain maps to 384 to 452 (AKKIGKRVQV…SQGHDLIAET (69 aa)).

This sequence belongs to the methylthiotransferase family. RimO subfamily. [4Fe-4S] cluster is required as a cofactor.

It localises to the cytoplasm. It catalyses the reaction L-aspartate(89)-[ribosomal protein uS12]-hydrogen + (sulfur carrier)-SH + AH2 + 2 S-adenosyl-L-methionine = 3-methylsulfanyl-L-aspartate(89)-[ribosomal protein uS12]-hydrogen + (sulfur carrier)-H + 5'-deoxyadenosine + L-methionine + A + S-adenosyl-L-homocysteine + 2 H(+). Its function is as follows. Catalyzes the methylthiolation of an aspartic acid residue of ribosomal protein uS12. This chain is Ribosomal protein uS12 methylthiotransferase RimO, found in Polynucleobacter asymbioticus (strain DSM 18221 / CIP 109841 / QLW-P1DMWA-1) (Polynucleobacter necessarius subsp. asymbioticus).